The chain runs to 59 residues: UPF0434 protein Shew_1640 (59 aa).

This sequence belongs to the UPF0434 family.

The chain is UPF0434 protein Shew_1640 from Shewanella loihica (strain ATCC BAA-1088 / PV-4).